The primary structure comprises 37 residues: Large ribosomal subunit protein bL36 (37 aa).

It belongs to the bacterial ribosomal protein bL36 family.

The polypeptide is Large ribosomal subunit protein bL36 (Legionella pneumophila subsp. pneumophila (strain Philadelphia 1 / ATCC 33152 / DSM 7513)).